The chain runs to 185 residues: MAEDRFPGWHGTTILAVRRGGEVVVAGDGQVSLGQTVIKGTARKVRRLSPGGHEVVAGFAGSTADAFTLLERLEKKLEAAPGQLARACVQLAKDWRMDKYLRNLEAMLIVTDGETLLVLTGAGDVLEPEHDVTAIGSGGNFALAAARGLMATDLPAEEIARKAMAIAADICVYTNGNLTVERISK.

The active site involves threonine 12. The Na(+) site is built by alanine 168, cysteine 171, and threonine 174.

This sequence belongs to the peptidase T1B family. HslV subfamily. In terms of assembly, a double ring-shaped homohexamer of HslV is capped on each side by a ring-shaped HslU homohexamer. The assembly of the HslU/HslV complex is dependent on binding of ATP.

It localises to the cytoplasm. It catalyses the reaction ATP-dependent cleavage of peptide bonds with broad specificity.. Its activity is regulated as follows. Allosterically activated by HslU binding. Functionally, protease subunit of a proteasome-like degradation complex believed to be a general protein degrading machinery. The polypeptide is ATP-dependent protease subunit HslV (Cereibacter sphaeroides (strain ATCC 17029 / ATH 2.4.9) (Rhodobacter sphaeroides)).